The sequence spans 671 residues: Annexin A6 (671 aa).

8 Annexin repeats span residues 18–89 (FNAS…SLMR), 90–161 (PPAY…VLLQ), 173–245 (DLVE…AVVK), 249–320 (STAE…KLCE), 361–432 (FNDD…GLML), 433–504 (TPAQ…SLAL), 519–594 (EDAK…AIVR), and 598–669 (NKPA…LCGG).

Belongs to the annexin family.

The protein localises to the cytoplasm. Its subcellular location is the melanosome. Its function is as follows. May associate with CD21. May regulate the release of Ca(2+) from intracellular stores. The polypeptide is Annexin A6 (ANXA6) (Gallus gallus (Chicken)).